We begin with the raw amino-acid sequence, 673 residues long: Kinesin-like protein KIFC1 (673 aa).

4 positions are modified to phosphoserine: Ser-6, Ser-26, Ser-31, and Ser-33. 2 disordered regions span residues 23 to 94 and 109 to 136; these read KAPS…TGPR and VPAVPVQKSGTSGVPPMAGGKKPSKRPA. Over residues 60-86 the composition is skewed to polar residues; it reads TKITTSHPRVPSLTTVPQTQGQTTAQK. A coiled-coil region spans residues 142–306; sequence QLCDLNAELK…RRRLHNQLQE (165 aa). The Kinesin motor domain occupies 310 to 663; sequence NIRVFCRVRP…LRFASKVNQC (354 aa). Residues 325-372 form a disordered region; sequence PTPPPGLLLFPSGPGGPSDPPTRLSLSRSDERRGTLSGAPAPPTRHDF. Residue Thr-359 is modified to Phosphothreonine. 410–417 contacts ATP; it reads GQTGSGKT.

Belongs to the TRAFAC class myosin-kinesin ATPase superfamily. Kinesin family. NCD subfamily. Binds NUBP1 and NUBP2. Interacts with PPP1R42.

The protein localises to the nucleus. Its subcellular location is the cytoplasm. It is found in the cytoskeleton. It localises to the microtubule organizing center. The protein resides in the centrosome. The protein localises to the spindle. Its subcellular location is the early endosome. Minus end-directed microtubule-dependent motor required for bipolar spindle formation. May contribute to movement of early endocytic vesicles. Regulates cilium formation and structure. In Homo sapiens (Human), this protein is Kinesin-like protein KIFC1 (KIFC1).